A 282-amino-acid polypeptide reads, in one-letter code: MTDSTLYFVKAFFLGIIEGLTEFIPVSSTGHLILFGDWINFESGSGKVFEVVIQLGAILAVMWIFRARLWQLIRGTLSGQRQEMLFTRNLLLAFFPAAIIGAIFIKAIKQTFYHPGVVAVTLVLGGLIMLWVERRAPRSDGSASETATEERATAHSLEEISWKQALGVGVAQCLAMIPGTSRSGATIIGGMVAGIQRKTATEFSFFLAMPTMLGAAVYDMYRNIDLLTSHDLGAIAVGFVAAFLSALLVVRAVLRFVANHTYRGFAWYRIALGVVVAAWLAF.

7 consecutive transmembrane segments (helical) span residues 6 to 26 (LYFVKAFFLGIIEGLTEFIPV), 45 to 65 (SGKVFEVVIQLGAILAVMWIF), 85 to 105 (LFTRNLLLAFFPAAIIGAIFI), 112 to 132 (FYHPGVVAVTLVLGGLIMLWV), 200 to 220 (ATEFSFFLAMPTMLGAAVYDM), 230 to 250 (HDLGAIAVGFVAAFLSALLVV), and 262 to 282 (YRGFAWYRIALGVVVAAWLAF).

This sequence belongs to the UppP family.

The protein resides in the cell inner membrane. The catalysed reaction is di-trans,octa-cis-undecaprenyl diphosphate + H2O = di-trans,octa-cis-undecaprenyl phosphate + phosphate + H(+). Catalyzes the dephosphorylation of undecaprenyl diphosphate (UPP). Confers resistance to bacitracin. The chain is Undecaprenyl-diphosphatase from Bordetella avium (strain 197N).